The sequence spans 582 residues: uncharacterized protein (582 aa).

Positions 1–27 (MNYAVLPPELNSLRMFTGAGSAPMLAA) are cleaved as a signal peptide. The segment covering 241–257 (GNGRAGLPGSGNVGNGN) has biased composition (gly residues). A disordered region spans residues 241–278 (GNGRAGLPGSGNVGNGNLGNSNLGSGNTGNSNVGFGNT). Low complexity predominate over residues 258 to 278 (LGNSNLGSGNTGNSNVGFGNT).

Belongs to the mycobacterial PPE family.

This is an uncharacterized protein from Mycobacterium tuberculosis (strain ATCC 25618 / H37Rv).